We begin with the raw amino-acid sequence, 193 residues long: Bcl-2-like protein 2 (193 aa).

A2 carries the post-translational modification N-acetylalanine. Positions 9 to 29 (DTRALVADFVGYKLRQKGYVC) match the BH4 motif. The BH1 signature appears at 85–104 (ELFQGGPNWGRLVAFFVFGA). The BH2 motif lies at 136 to 151 (DWIHSSGGWAEFTALY).

It belongs to the Bcl-2 family. As to quaternary structure, interacts with HIF3A (via C-terminus domain). Interacts with BOP.

The protein localises to the mitochondrion membrane. Its function is as follows. Promotes cell survival. Blocks dexamethasone-induced apoptosis. Mediates survival of postmitotic Sertoli cells by suppressing death-promoting activity of BAX. This is Bcl-2-like protein 2 (BCL2L2) from Bos taurus (Bovine).